The chain runs to 293 residues: 33 kDa chaperonin (293 aa).

Intrachain disulfides connect Cys-237–Cys-239 and Cys-271–Cys-274.

Belongs to the HSP33 family. Under oxidizing conditions two disulfide bonds are formed involving the reactive cysteines. Under reducing conditions zinc is bound to the reactive cysteines and the protein is inactive.

The protein localises to the cytoplasm. In terms of biological role, redox regulated molecular chaperone. Protects both thermally unfolding and oxidatively damaged proteins from irreversible aggregation. Plays an important role in the bacterial defense system toward oxidative stress. In Haemophilus influenzae (strain PittGG), this protein is 33 kDa chaperonin.